Reading from the N-terminus, the 288-residue chain is MESYKCRVCFKSFVNGKALGGHMRSHMSNSHEEEQRPSQLSYETESDVSSSDPKFAFTSSVLLEDGESESESSRNVINLTRKRSKRTRKLDSFVTKKVKTSQLGYKPESDQEPPHSSASDTTTEEDLAFCLMMLSRDKWKKNKSNKEVVEEIETEEESEGYNKINRATTKGRYKCETCGKVFKSYQALGGHRASHKKNRVSNNKTEQRSETEYDNVVVVAKRIHECPICLRVFASGQALGGHKRSHGVGNLSVNQQRRVHRNESVKQRMIDLNLPAPTEEDEVSVVFQ.

Residues 4 to 26 (YKCRVCFKSFVNGKALGGHMRSH) form a C2H2-type 1 zinc finger. Disordered stretches follow at residues 20–82 (GGHM…LTRK), 101–123 (SQLGYKPESDQEPPHSSASDTTT), and 189–210 (GGHRASHKKNRVSNNKTEQRSE). The span at 37-52 (PSQLSYETESDVSSSD) shows a compositional bias: polar residues. 2 C2H2-type zinc fingers span residues 173–195 (YKCETCGKVFKSYQALGGHRASH) and 224–246 (HECPICLRVFASGQALGGHKRSH).

The protein localises to the nucleus. In terms of biological role, probable transcription factor that may be involved in stress responses. This is Zinc finger protein ZAT9 (ZAT9) from Arabidopsis thaliana (Mouse-ear cress).